The sequence spans 365 residues: Putative tRNA 2'-phosphotransferase (365 aa).

2 disordered regions span residues 1–35 and 231–254; these read MYKN…IRPR and LLDA…PESI. Residues 17-27 show a composition bias toward low complexity; sequence SGTPATKSSSK.

The protein belongs to the KptA/TPT1 family.

It catalyses the reaction 2'-phospho-[ligated tRNA] + NAD(+) = mature tRNA + ADP-alpha-D-ribose 1'',2''-cyclic phosphate + nicotinamide. Its function is as follows. Catalyzes the last step of tRNA splicing, the transfer of the splice junction 2'-phosphate from ligated tRNA to NAD to produce ADP-ribose 1''-2'' cyclic phosphate. This chain is Putative tRNA 2'-phosphotransferase, found in Schizosaccharomyces pombe (strain 972 / ATCC 24843) (Fission yeast).